A 97-amino-acid polypeptide reads, in one-letter code: UPF0235 protein Ppha_2415 (97 aa).

This sequence belongs to the UPF0235 family.

This chain is UPF0235 protein Ppha_2415, found in Pelodictyon phaeoclathratiforme (strain DSM 5477 / BU-1).